The sequence spans 399 residues: Probable aspartate/prephenate aminotransferase (399 aa).

Positions 39, 125, and 175 each coordinate L-aspartate. Lysine 239 carries the N6-(pyridoxal phosphate)lysine modification. Arginine 375 contacts L-aspartate.

Belongs to the class-I pyridoxal-phosphate-dependent aminotransferase family. As to quaternary structure, homodimer. Requires pyridoxal 5'-phosphate as cofactor.

It is found in the cytoplasm. The catalysed reaction is L-aspartate + 2-oxoglutarate = oxaloacetate + L-glutamate. It carries out the reaction L-arogenate + 2-oxoglutarate = prephenate + L-glutamate. In terms of biological role, catalyzes the reversible conversion of aspartate and 2-oxoglutarate to glutamate and oxaloacetate. Can also transaminate prephenate in the presence of glutamate. The chain is Probable aspartate/prephenate aminotransferase (aatA) from Rickettsia typhi (strain ATCC VR-144 / Wilmington).